Here is a 314-residue protein sequence, read N- to C-terminus: 4-hydroxy-3-methylbut-2-enyl diphosphate reductase (314 aa).

Cys-12 contributes to the [4Fe-4S] cluster binding site. His-41 and His-74 together coordinate (2E)-4-hydroxy-3-methylbut-2-enyl diphosphate. Dimethylallyl diphosphate-binding residues include His-41 and His-74. Isopentenyl diphosphate contacts are provided by His-41 and His-74. Cys-96 is a binding site for [4Fe-4S] cluster. His-124 is a binding site for (2E)-4-hydroxy-3-methylbut-2-enyl diphosphate. His-124 serves as a coordination point for dimethylallyl diphosphate. An isopentenyl diphosphate-binding site is contributed by His-124. Glu-126 serves as the catalytic Proton donor. Thr-167 lines the (2E)-4-hydroxy-3-methylbut-2-enyl diphosphate pocket. Cys-197 is a [4Fe-4S] cluster binding site. Positions 225, 226, 227, and 269 each coordinate (2E)-4-hydroxy-3-methylbut-2-enyl diphosphate. Positions 225, 226, 227, and 269 each coordinate dimethylallyl diphosphate. Residues Ser-225, Ser-226, Asn-227, and Ser-269 each coordinate isopentenyl diphosphate.

Belongs to the IspH family. [4Fe-4S] cluster serves as cofactor.

It catalyses the reaction isopentenyl diphosphate + 2 oxidized [2Fe-2S]-[ferredoxin] + H2O = (2E)-4-hydroxy-3-methylbut-2-enyl diphosphate + 2 reduced [2Fe-2S]-[ferredoxin] + 2 H(+). The catalysed reaction is dimethylallyl diphosphate + 2 oxidized [2Fe-2S]-[ferredoxin] + H2O = (2E)-4-hydroxy-3-methylbut-2-enyl diphosphate + 2 reduced [2Fe-2S]-[ferredoxin] + 2 H(+). It participates in isoprenoid biosynthesis; dimethylallyl diphosphate biosynthesis; dimethylallyl diphosphate from (2E)-4-hydroxy-3-methylbutenyl diphosphate: step 1/1. Its pathway is isoprenoid biosynthesis; isopentenyl diphosphate biosynthesis via DXP pathway; isopentenyl diphosphate from 1-deoxy-D-xylulose 5-phosphate: step 6/6. Functionally, catalyzes the conversion of 1-hydroxy-2-methyl-2-(E)-butenyl 4-diphosphate (HMBPP) into a mixture of isopentenyl diphosphate (IPP) and dimethylallyl diphosphate (DMAPP). Acts in the terminal step of the DOXP/MEP pathway for isoprenoid precursor biosynthesis. The protein is 4-hydroxy-3-methylbut-2-enyl diphosphate reductase of Haemophilus influenzae (strain PittEE).